A 724-amino-acid polypeptide reads, in one-letter code: Protein-glutamine gamma-glutamyltransferase 5 (724 aa).

The residue at position 2 (alanine 2) is an N-acetylalanine. Catalysis depends on residues cysteine 283, histidine 342, and aspartate 365. Asparagine 405, aspartate 407, glutamate 453, and glutamate 458 together coordinate Ca(2+). Composition is skewed to polar residues over residues 473 to 486 (RSQGPHQANSNPFS) and 495 to 505 (ARSPDSPSLQP). A disordered region spans residues 473–505 (RSQGPHQANSNPFSSVPPRHNSARSPDSPSLQP).

It belongs to the transglutaminase superfamily. Transglutaminase family. The cofactor is Ca(2+).

The protein localises to the cytoplasm. The catalysed reaction is L-glutaminyl-[protein] + L-lysyl-[protein] = [protein]-L-lysyl-N(6)-5-L-glutamyl-[protein] + NH4(+). Functionally, catalyzes the cross-linking of proteins and the conjugation of polyamines to proteins. Contributes to the formation of the cornified cell envelope of keratinocytes. In Mus musculus (Mouse), this protein is Protein-glutamine gamma-glutamyltransferase 5 (Tgm5).